A 205-amino-acid chain; its full sequence is Thymidine kinase (205 aa).

ATP is bound by residues 9–16 (SAMNAGKS) and 87–90 (DECQ). Glutamate 88 (proton acceptor) is an active-site residue. Zn(2+) is bound by residues cysteine 145, cysteine 147, cysteine 182, and histidine 185.

This sequence belongs to the thymidine kinase family. In terms of assembly, homotetramer.

It is found in the cytoplasm. It catalyses the reaction thymidine + ATP = dTMP + ADP + H(+). Its activity is regulated as follows. Allosteric enzyme which is feedback inhibited by dTTP and activated by a number of dNDP and dNTP. In terms of biological role, phosphorylates both thymidine and deoxyuridine. The polypeptide is Thymidine kinase (Escherichia coli O157:H7).